A 299-amino-acid chain; its full sequence is ATP phosphoribosyltransferase (299 aa).

The protein belongs to the ATP phosphoribosyltransferase family. Long subfamily. As to quaternary structure, equilibrium between an active dimeric form, an inactive hexameric form and higher aggregates. Interconversion between the various forms is largely reversible and is influenced by the natural substrates and inhibitors of the enzyme. Mg(2+) serves as cofactor.

It localises to the cytoplasm. The enzyme catalyses 1-(5-phospho-beta-D-ribosyl)-ATP + diphosphate = 5-phospho-alpha-D-ribose 1-diphosphate + ATP. It functions in the pathway amino-acid biosynthesis; L-histidine biosynthesis; L-histidine from 5-phospho-alpha-D-ribose 1-diphosphate: step 1/9. Its activity is regulated as follows. Feedback inhibited by histidine. In terms of biological role, catalyzes the condensation of ATP and 5-phosphoribose 1-diphosphate to form N'-(5'-phosphoribosyl)-ATP (PR-ATP). Has a crucial role in the pathway because the rate of histidine biosynthesis seems to be controlled primarily by regulation of HisG enzymatic activity. This is ATP phosphoribosyltransferase from Salmonella dublin (strain CT_02021853).